The primary structure comprises 516 residues: Exoglucanase 1 (516 aa).

Positions 1-17 (MRASLLAFSLAAAVAGG) are cleaved as a signal peptide. Residues 18-445 (QQAGTLTAKR…GHLGISPFSG (428 aa)) are catalytic. N-linked (GlcNAc...) asparagine glycosylation occurs at N45. E223 serves as the catalytic Nucleophile. E228 (proton donor) is an active-site residue. N281 is a glycosylation site (N-linked (GlcNAc...) asparagine). Residues 444-481 (SGGSSGTPPSNPSSSASPTSSTAKPSSTSTASNPSGTG) form a disordered region. A linker region spans residues 446 to 480 (GSSGTPPSNPSSSASPTSSTAKPSSTSTASNPSGT). The segment covering 449–481 (GTPPSNPSSSASPTSSTAKPSSTSTASNPSGTG) has biased composition (low complexity). In terms of domain architecture, CBM1 spans 480-516 (TGAAHWAQCGGIGFSGPTTCPEPYTCAKDHDIYSQCV). Disulfide bonds link C488-C505 and C499-C515.

It belongs to the glycosyl hydrolase 7 (cellulase C) family.

The protein resides in the secreted. It carries out the reaction Hydrolysis of (1-&gt;4)-beta-D-glucosidic linkages in cellulose and cellotetraose, releasing cellobiose from the non-reducing ends of the chains.. The sequence is that of Exoglucanase 1 (cbh-1) from Neurospora crassa (strain ATCC 24698 / 74-OR23-1A / CBS 708.71 / DSM 1257 / FGSC 987).